We begin with the raw amino-acid sequence, 3469 residues long: MATRRAGRSWEVSPSGPRPAAGEAAAASPPVLSLSHFCRSPFLCFGDVRLGGSRTLPLLLHNPNDEAARVEVCRAPAAQQGFSVSPRRFQLQPKEKIVISVNWTPLKEGRVRETVTFLVNDVLKHQAILLGNAEEQKKKKRSLWGTIKKKKMSASSNNKRISSAQNVNKTFCVSQKADRVRNPLQACENLDVNEGCSPTENNSLILEENKIPISPISPIFKECNGETSLPLSVRRSTTYISLHARENGDLLKVEDASILEDFSFSEKVVNETSFNSTNNINDQTEENCKLILTPACSSTLNITQSQGNFLSPDSFVKNSRAANNELEVVTCLSSNILMKDNSMPLHLESKSVHENYRKILSPDSFINDNYGLNQDLESEPINPILSPNQFVKDNMAYTCIYQQTCKLSLSSNKNSQFSQSQDPRTNGILPCIPECQSSKSPKATFEEHRALEMKSDCYSFTKNQPKFSAMQDISSCSQDKLTRRPILSATITKRKSNFTRENQKETNKPKAKRCLNSVAGEFEKVTDNIKEKDGFQSCLPVIDPVFSKPKSYKIVVTPPSKTTLIARKRRSEGDREDANVRITATGHSEIQEIKRIHFSPVESKTSVLKKTKKMTTPISKHFNREKLNLKKKTDSRIYRTPNSKTSKKTKPIVAVAQSTLTFIKPLKTDIPRHPMPFAAKNMFYDERWKEKQEQGFTWWLNFILTPDDFTVKTNISEVNAATLLLGVESQHKISVPRAPTKDEMSLRAYTARCRLNRLRRAACRLFTSEKMVKAIKKLEIEIEARRLIVRRDRHLWKDVGERQKVLNWLLSYNPLWLRIGLETVFGELLSLEDNSDVTGLAVFILNRLLWNPDIAAEYRHPTVPHLYRDGHEEALSKFTLKKLLLLVCFLDYAKISKLIDHDPCLFCKDAEFKTSKDILLAFSRDFLSGEGDLSRHLSLLGLPVNHVQTPFDEFDFAVTNLAVDLQCGVRLVRIMELLTRDWNLSKKLRMPAISRLQKMHNVDIVLQILRSQGIQLNDEHGNAILSKDIVDRHREKTLALLWKIAFAFQVDISLNLDQLKEEIDFLKHTQSMKKMSAQSCHSDVIINKKKDNRNSGSFEQYSESIKLLMEWVNAVCAFYNKKVENFTVSFSDGRVLCYLIHHYHPYYVPFDAICQRTTQTIECTQTGSVVLNSSSESDGSSLDLSLKAFDHENTSELYKELLENEKKNFQLVRSAVRDLGGIPAMINHSDMSNTIPDEKVVITYLSFLCSRLLDLCKETRAARLIQTTWRKYKLKTDMKRHQEQDKAARIIQSAIINFLTKRRLKKEISAALAIQKYWRRFLAQRKLLMLKKEKLEKVQNESASIIQRYWRRYSTRKQFLKLRYYSIILQSRIRMIIAVTSYKRYLWATVTIQRHWRASLRRKHDQQRYKMLKSSCLIIQSMFRRWKRRKMQLQIKATRVLQRAFREWHVRKRAKEEKSAIVIQSWYRMHKELRKYVQIRSCVVIIQTRFRCLQAQKLYKRKKEAILTIQKYYKAYLKGKMERTNYLQKRAAAIRLQTAFRRMKARNLYRQSRAACVLQSYWRMRQDRFRFLNLKKITTKLQAQVRKHQQLQKYRKIKKAALVIQIHFRAYVSAKKVLASYQKTRSAVLVLQSAYRGMQARKKFIHILTSIIKIQSCYRAYISRKRFLRLKNATVKLQSIVKMRQTRKRYLHWRAASLFIQRWYRSAKLAALKRHQYVQMRESCIKLQAFVRGHLVRKQIRLQRQAAISLQSYFRMRKKRQYYLEIYKATLVIQNYYRAYKAQVNQRKNFLQVKRAVTCLQAAYRGYKVRQLIKQQSIAALKIQTAFRGYRERKKYQYVLQSTIKIQRWYRTCRTVRDVRTQFLKTRAAVISLQCAFRGWKVRKQIRRERQAAVRIQSAFRMAKAQKQFKLLKTAALVIQQHLRAWTAGKRQRMEYIELREAALRLQSTWKGKRVRRQVQKQHKCAVIIQSNYRMYVQQKKWKIMKKAARLIQMYYRAYSIGRKQRQLYLKTKAAAVVLQSAYRSMKVRKKIKECNRAAVTIQSTYRAYKTKKNYTNCRASAIIIQRWYRGTKIANHQRKEYLNLKKTAVKIQAIYRGIRVRRHNRHLHMAATVIQAMFKMHQAKMRYHKMRTAAVIIQVRYRAYREGKIQRAKYLTIMKAITVLQASFRGTRVRQTLRKMQSAATLIQSYYRRHRQQAYFTKLKKVTRTIQQRYRAVKERNTQLQRYNKLRHSIICIQAGFRGMKARRHLKSMHLAATLIQRRFRTLRMRRRFLHLRKTAIWIQRKYRATVCAKHYFQHFVRVQKAVIKIQSSYRGWMVRKKMQEVHRAATAIQAAFRMHRANVKYQALKHASVVIQQQFRASRAAKLQRQCYLQQRHSALILQAAFRGMKARGHLKNMHSSATLIQSTFRSLVVRKRFISLKRATVFVQRKYRATICARHHLHQFLKLKKAVITIQSSYRRLVAKKKLQEMHRAAVLIQATYRMHRTYVTFQTWKHASILIQQHYRTYRAAKLQRENSVPQRRSALIIQAVYKGMKARQLLREKHRAAIIIQSTYRMYRQYLFYQKIQWATKVIQEKYRANKKKALQHSALRNAAAACTEADFQDMILRKPTQEQHQAATIIQKHFKASKVRKHYLHLRANVIFVQRRYRALTAVRTQAVVCTQSSYRSCKVQEDMQHRHLAATRIQSFYRMHRAKLDYQAKKTAVAVIQNYFRSYIRVKVEREKFLAVQKSVRIIQAAFRGMKVRERLKSLSEVNMVASAKQSAFYSCRTEAQCAAVHGSALRTQKWHGASLVTCSQEAEYPQREALVATQRAFCEMVTRKLETQKCAALRIQYFLQMAVCRRRFVQQKRAAVTLQQYFRTWQTRRQFLLYRKAAVVLQNHHRAFLSTKHQRQVYLQIRSSIIMIQARTRGFIQKRRFQKIKDSTIKIQAVWRSYKARKYLHQVKAACKIQAWYRYWKARKDYLAVLKAVKIIQGCFYTKLERRRFLNVRASTIIIQRKWRAILSGRIACEHFLMIKRHQAACLIQANFRRYKGRQVFLRQKSAALTIQRYIRARKAGKCQRIKYVELKKSTVVLQALVRGWLVRKRILEQRTKIRLLHFTAAAYYHLSALKIQRAYKRHMAMKNANKQVNAVICIQRWFRTRLQQKRFAQKYPSILTSQHEVPECMSQQNRAASVIQKAVRRFLLRKKQEKFNNAISRIQSLWRGYSWRKKNDCTKIKAIRLSLQLVNREIREENKLYKRTALALHYLLTYKHLSAILEALKHLEVVTRLSPLCCENMAQSGAVSKIFVLIRSCNRSIPCMEVIRYAVQVLLNVAKYEKTTAAVSDVENCIDTLLDLLQMYREKPGDKVADKGGSIFTKTCCLLAVLLKTTNRASSVRSKSKVVDRIYSLYKLTARKHKMNTERTLYKQKMNSSISTPFIPETPVRTRIVSRLKPDWVLRRDNMEEITNPLQAIQMVMDTLGIPY.

The tract at residues 1–24 is disordered; it reads MATRRAGRSWEVSPSGPRPAAGEA. Low complexity predominate over residues 13–24; sequence SPSGPRPAAGEA. Phosphoserine is present on residues Ser-273, Ser-276, Ser-361, Ser-386, Ser-420, and Ser-599. One can recognise a Calponin-homology (CH) 1 domain in the interval 913 to 1049; it reads KTSKDILLAF…LLWKIAFAFQ (137 aa). Positions 1050–1069 form a coiled coil; it reads VDISLNLDQLKEEIDFLKHT. A Phosphoserine modification is found at Ser-1095. A Calponin-homology (CH) 2 domain is found at 1102–1253; that stretch reads SESIKLLMEW…YLSFLCSRLL (152 aa). IQ domains lie at 1258-1287, 1339-1370, 1385-1414, 1529-1560, 1574-1605, 1624-1653, 1647-1676, 1720-1749, 1743-1774, 1793-1822, 1816-1845, 1866-1895, 1889-1920, 1939-1970, 1962-1993, 2012-2041, 2035-2066, 2085-2116, 2108-2139, 2158-2189, 2181-2210, 2231-2262, 2304-2333, 2327-2358, 2377-2408, 2400-2431, 2450-2481, 2523-2554, 2681-2712, 2731-2762, 2851-2882, 2901-2930, 2924-2955, 2946-2977, 3021-3050, 3071-3102, 3173-3202, and 3196-3227; these read ETRA…QDKA, QNES…IILQ, YLWA…MLKS, KRAA…VLQS, LKKI…LVIQ, TRSA…SIIK, ILTS…ATVK, MRES…AAIS, QRQA…LVIQ, VKRA…AALK, QSIA…STIK, TRAA…AAVR, ERQA…LVIQ, LREA…VIIQ, QHKC…RLIQ, TKAA…AAVT, CNRA…IIIQ, LKKT…TVIQ, LHMA…VIIQ, IMKA…TLIQ, MQSA…VTRT, LRHS…TLIQ, VQKA…AATA, VHRA…VVIQ, QRHS…TLIQ, MHSS…VFVQ, LKKA…VLIQ, QRRS…IIIQ, RHLA…AVIQ, VQKS…MVAS, QKRA…VVLQ, IRSS…STIK, IKDS…KIQA, QVKA…KIIQ, RHQA…AALT, LKKS…RLLH, QNRA…AISR, and FNNA…IRLS.

It is found in the cytoplasm. It localises to the cytoskeleton. Its subcellular location is the spindle. The protein localises to the nucleus. Functionally, probable role in mitotic spindle regulation and coordination of mitotic processes. May have a preferential role in regulating neurogenesis. This is Abnormal spindle-like microcephaly-associated protein homolog (ASPM) from Canis lupus familiaris (Dog).